Here is a 642-residue protein sequence, read N- to C-terminus: Threonine--tRNA ligase (642 aa).

The TGS domain occupies 1-61 (MPIITLPDGS…EADASLAIIT (61 aa)). The segment at 243-534 (DHRKIGKQLD…LTEEYAGLFP (292 aa)) is catalytic. Positions 334, 385, and 511 each coordinate Zn(2+).

Belongs to the class-II aminoacyl-tRNA synthetase family. As to quaternary structure, homodimer. Requires Zn(2+) as cofactor.

The protein resides in the cytoplasm. It carries out the reaction tRNA(Thr) + L-threonine + ATP = L-threonyl-tRNA(Thr) + AMP + diphosphate + H(+). In terms of biological role, catalyzes the attachment of threonine to tRNA(Thr) in a two-step reaction: L-threonine is first activated by ATP to form Thr-AMP and then transferred to the acceptor end of tRNA(Thr). Also edits incorrectly charged L-seryl-tRNA(Thr). The chain is Threonine--tRNA ligase from Aeromonas hydrophila subsp. hydrophila (strain ATCC 7966 / DSM 30187 / BCRC 13018 / CCUG 14551 / JCM 1027 / KCTC 2358 / NCIMB 9240 / NCTC 8049).